A 342-amino-acid chain; its full sequence is L-threonine 3-dehydrogenase (342 aa).

Cys38 contacts Zn(2+). Residues Thr40 and His43 each act as charge relay system in the active site. Positions 63, 64, 93, 96, 99, and 107 each coordinate Zn(2+). NAD(+) contacts are provided by residues Val175, Asp195, Arg200, 262–264 (LGI), and 286–287 (IY).

The protein belongs to the zinc-containing alcohol dehydrogenase family. As to quaternary structure, homotetramer. The cofactor is Zn(2+).

It localises to the cytoplasm. The catalysed reaction is L-threonine + NAD(+) = (2S)-2-amino-3-oxobutanoate + NADH + H(+). It participates in amino-acid degradation; L-threonine degradation via oxydo-reductase pathway; glycine from L-threonine: step 1/2. Catalyzes the NAD(+)-dependent oxidation of L-threonine to 2-amino-3-ketobutyrate. In Coxiella burnetii (strain Dugway 5J108-111), this protein is L-threonine 3-dehydrogenase.